A 516-amino-acid polypeptide reads, in one-letter code: Citrate synthase, glyoxysomal (516 aa).

Residues 1 to 43 (MPTDMELSPSNVARHRLAVLAAHLSAASLEPPVMASSLEAHCV) constitute a glyoxysome transit peptide. Active-site residues include His329, His368, and Asp424.

The protein belongs to the citrate synthase family.

It localises to the glyoxysome. The catalysed reaction is oxaloacetate + acetyl-CoA + H2O = citrate + CoA + H(+). The protein operates within carbohydrate metabolism; glyoxylate cycle; isocitrate from oxaloacetate: step 1/2. The polypeptide is Citrate synthase, glyoxysomal (Cucurbita maxima (Pumpkin)).